Reading from the N-terminus, the 274-residue chain is NH(3)-dependent NAD(+) synthetase (274 aa).

Residue 46–53 participates in ATP binding; sequence GISGGQDS. Residue D52 coordinates Mg(2+). R140 is a binding site for deamido-NAD(+). T160 is a binding site for ATP. Residue E165 participates in Mg(2+) binding. Deamido-NAD(+) contacts are provided by K173 and D180. ATP is bound by residues K189 and T211. 260-261 contacts deamido-NAD(+); it reads HK.

This sequence belongs to the NAD synthetase family. In terms of assembly, homodimer.

It catalyses the reaction deamido-NAD(+) + NH4(+) + ATP = AMP + diphosphate + NAD(+) + H(+). The protein operates within cofactor biosynthesis; NAD(+) biosynthesis; NAD(+) from deamido-NAD(+) (ammonia route): step 1/1. Its function is as follows. Catalyzes the ATP-dependent amidation of deamido-NAD to form NAD. Uses ammonia as a nitrogen source. The chain is NH(3)-dependent NAD(+) synthetase from Streptococcus pyogenes serotype M2 (strain MGAS10270).